The primary structure comprises 879 residues: Levansucrase (879 aa).

Positions 1 to 37 (MTKEHKKMYKAGKYWAVATLVSASILMEVGVTTHADA) are cleaved as a signal peptide. Tandem repeats lie at residues 66–81 (DNATSGSTKQESSIAN), 82–97 (DNATSGSTKQESSIAN), 98–113 (DNATSGSTKQESSIAN), 114–129 (DNATSGSTKQESSVAN), 130–145 (DNATSGSTKQESSVAN), 146–161 (DNATSGSTKQESSVAN), and 162–177 (DNATSGSTKQESSVAN). A 7 X 16 AA tandem repeats of D-N-A-T-S-G-S-T-K-Q-E-S-S-[IV]-A-N region spans residues 66–177 (DNATSGSTKQ…STKQESSVAN (112 aa)). Composition is skewed to polar residues over residues 66–180 (DNAT…NDTK) and 189–213 (NTSNTENDNSQLKQTNNEQPSAATQ). The disordered stretch occupies residues 66–213 (DNATSGSTKQ…NNEQPSAATQ (148 aa)). Residues Trp311, Asp312, and Ser382 each coordinate sucrose. Asp312 (nucleophile) is an active-site residue. Asp460 lines the Ca(2+) pocket. Sucrose is bound by residues Arg465 and Asp466. The Ca(2+) site is built by Gln491, Leu528, Asn530, and Asp562. Glu563 provides a ligand contact to sucrose. The active-site Proton donor/acceptor is the Glu565. Arg583 provides a ligand contact to sucrose. The disordered stretch occupies residues 743–830 (SSGLGLKPHQ…TPAKPVQAGQ (88 aa)). Over residues 754–821 (VNPSQPTTPA…KPVNPSQPTT (68 aa)) the composition is skewed to polar residues. The LPXTG sorting signal motif lies at 841 to 845 (LPQTG). Thr844 is subject to Pentaglycyl murein peptidoglycan amidated threonine. A propeptide spans 845-879 (GENNSQSQTMSFIGILLAMFGSLLGFLGIKKRRND) (removed by sortase).

The protein belongs to the glycosyl hydrolase 68 family.

Its subcellular location is the secreted. It localises to the cell wall. It catalyses the reaction [6)-beta-D-fructofuranosyl-(2-&gt;](n) alpha-D-glucopyranoside + sucrose = [6)-beta-D-fructofuranosyl-(2-&gt;](n+1) alpha-D-glucopyranoside + D-glucose. Ca(2+) may play an important structural role and promote stability of levansucrase. Its function is as follows. Fructosyltransferase that catalyzes the polymerization of the fructose moiety of sucrose to produce levan polymer and the fructo-oligosaccharide (FOS) 1-kestose. Also displays sucrose hydrolase activity. The chain is Levansucrase from Fructilactobacillus sanfranciscensis (Lactobacillus sanfranciscensis).